We begin with the raw amino-acid sequence, 399 residues long: Imidazolonepropionase (399 aa).

2 residues coordinate Fe(3+): H68 and H70. The Zn(2+) site is built by H68 and H70. 4-imidazolone-5-propanoate-binding residues include R77, Y140, and H173. Position 140 (Y140) interacts with N-formimidoyl-L-glutamate. H238 provides a ligand contact to Fe(3+). Residue H238 coordinates Zn(2+). A 4-imidazolone-5-propanoate-binding site is contributed by Q241. A Fe(3+)-binding site is contributed by D313. D313 is a binding site for Zn(2+). Residues N315 and G317 each coordinate N-formimidoyl-L-glutamate. T318 is a binding site for 4-imidazolone-5-propanoate.

Belongs to the metallo-dependent hydrolases superfamily. HutI family. Zn(2+) is required as a cofactor. Fe(3+) serves as cofactor.

The protein resides in the cytoplasm. The catalysed reaction is 4-imidazolone-5-propanoate + H2O = N-formimidoyl-L-glutamate. It participates in amino-acid degradation; L-histidine degradation into L-glutamate; N-formimidoyl-L-glutamate from L-histidine: step 3/3. Catalyzes the hydrolytic cleavage of the carbon-nitrogen bond in imidazolone-5-propanoate to yield N-formimidoyl-L-glutamate. It is the third step in the universal histidine degradation pathway. In Rhizorhabdus wittichii (strain DSM 6014 / CCUG 31198 / JCM 15750 / NBRC 105917 / EY 4224 / RW1) (Sphingomonas wittichii), this protein is Imidazolonepropionase.